Here is a 163-residue protein sequence, read N- to C-terminus: MVTKKSKKAWPWLWFSVLVILLDQLSKYLANHFLSLGHPVKILPFLNFTLNYNTGAAFSFLGTENGWQIIFFAAISFVVSIFLILWLSRTSRSEIMMSLGLSLIIGGALGNFIDRLRWSYVTDFIDFHIKDWHFATFNVADSAICVGVFLLIVHMLLTPSSKP.

The next 4 membrane-spanning stretches (helical) occupy residues Ala9–Leu29, Ile42–Gly62, Trp67–Leu87, and Ser93–Ile113. Residues Asp123 and Asp141 contribute to the active site. Residues Phe137 to Leu157 form a helical membrane-spanning segment.

The protein belongs to the peptidase A8 family.

It is found in the cell inner membrane. The enzyme catalyses Release of signal peptides from bacterial membrane prolipoproteins. Hydrolyzes -Xaa-Yaa-Zaa-|-(S,diacylglyceryl)Cys-, in which Xaa is hydrophobic (preferably Leu), and Yaa (Ala or Ser) and Zaa (Gly or Ala) have small, neutral side chains.. The protein operates within protein modification; lipoprotein biosynthesis (signal peptide cleavage). Its function is as follows. This protein specifically catalyzes the removal of signal peptides from prolipoproteins. In Coxiella burnetii (strain RSA 331 / Henzerling II), this protein is Lipoprotein signal peptidase.